A 465-amino-acid polypeptide reads, in one-letter code: Sensor histidine kinase ZraS (465 aa).

Topologically, residues 1 to 14 (MRFMQRSKDSLAKW) are cytoplasmic. A helical transmembrane segment spans residues 15–35 (LSAILPVVIVGLVGLFAVTVI). Topologically, residues 36 to 201 (RDYGRASEAD…ATQSGEKRNT (166 aa)) are periplasmic. A helical membrane pass occupies residues 202–222 (LIILFALATVLLASVLSFFWY). Residues 223-465 (RRYLRSRQLL…VNITRKDPQG (243 aa)) lie on the Cytoplasmic side of the membrane. Residues 251-458 (GVAHEIRNPL…TFTLWLPVNI (208 aa)) enclose the Histidine kinase domain. Histidine 254 is subject to Phosphohistidine; by autocatalysis.

Autophosphorylated.

Its subcellular location is the cell inner membrane. The enzyme catalyses ATP + protein L-histidine = ADP + protein N-phospho-L-histidine.. Activity of the ZraS/ZraR two-component system is repressed by the zinc-bound form of ZraP, which probably interacts with the periplasmic region of ZraS. Functionally, part of the Zra signaling pathway, an envelope stress response (ESR) system composed of the periplasmic accessory protein ZraP, the histidine kinase ZraS and the transcriptional regulator ZraR. The ZraPSR system contributes to antibiotic resistance and is important for membrane integrity in the presence of membrane-targeting biocides. ZraS is a member of the two-component regulatory system ZraS/ZraR. Functions as a membrane-associated sensor kinase that phosphorylates ZraR in response to high concentrations of Zn(2+) or Pb(2+) in the medium. Binds one zinc molecule with high affinity via its periplasmic domain, inducing a conformational change that is transmitted to the histidine kinase domain and leads to the activation of ZraR. The system has no direct role in zinc or copper resistance. The chain is Sensor histidine kinase ZraS from Escherichia coli (strain K12).